The sequence spans 546 residues: Thermolysin (546 aa).

The signal sequence occupies residues 1-25; sequence MNKRAMLGAIGLAFGLMAWPFGASA. The propeptide at 26 to 228 is activation peptide; it reads KEKSMVWNEQ…EAKPGGGQPV (203 aa). Ca(2+) is bound by residues D287, D289, Q291, and D368. H372 is a binding site for Zn(2+). E373 is an active-site residue. Zn(2+)-binding residues include H376 and E396. Residues E407, N413, D415, E417, E420, Y423, T424, I427, and D430 each coordinate Ca(2+). H461 (proton donor) is an active-site residue.

This sequence belongs to the peptidase M4 family. Ca(2+) is required as a cofactor. Zn(2+) serves as cofactor.

Its subcellular location is the secreted. The catalysed reaction is Preferential cleavage: Xaa-|-Leu &gt; Xaa-|-Phe.. In terms of biological role, extracellular zinc metalloprotease. This Alicyclobacillus acidocaldarius subsp. acidocaldarius (Bacillus acidocaldarius) protein is Thermolysin.